The primary structure comprises 3907 residues: Cyclo-acetoacetyl-L-tryptophan synthase (3907 aa).

Residues K2 to S436 enclose the Ketosynthase family 3 (KS3) domain. Active-site for beta-ketoacyl synthase activity residues include C176, H313, and H356. The segment at I555–L870 is malonyl-CoA:ACP transacylase (MAT) domain. The N-terminal hotdog fold stretch occupies residues H937–A1074. The interval H937–P1236 is dehydratase (DH) domain. One can recognise a PKS/mFAS DH domain in the interval H937 to S1239. Residues L1092–S1239 are C-terminal hotdog fold. Positions A1386–D1573 are methyltransferase (MT) domain. Residues G2064–V2238 are ketoreductase (KR)domain. Residues T2324–R2352 are disordered. In terms of domain architecture, Carrier 1 spans D2356–N2430. S2390 bears the O-(pantetheine 4'-phosphoryl)serine mark. The segment at M2504–S2926 is condensation. An adenylation region spans residues F2959–D3359. The Carrier 2 domain occupies K3474–K3549. An O-(pantetheine 4'-phosphoryl)serine modification is found at S3509. The segment at L3594–E3813 is reductase (RED) domain.

In the C-terminal section; belongs to the NRP synthetase family.

The enzyme catalyses L-tryptophan + malonyl-CoA + acetyl-CoA = cyclo-acetoacetyl-L-tryptophan + CO2 + 2 CoA + H2O. Its pathway is secondary metabolite biosynthesis. Its function is as follows. Hybrid PKS-NRPS synthetase; part of the gene cluster that mediates the biosynthesis of the fungal neurotoxin cyclopiazonic acid (CPA), a nanomolar inhibitor of Ca(2+)-ATPase with a unique pentacyclic indole tetramic acid scaffold. The hybrid two module polyketide synthase-nonribosomal peptide synthetase (PKS-NRPS) cpaS incorporates acetyl-CoA, malonyl-CoA, and tryptophan (Trp) and utilizes a C-terminal redox-incompetent reductase domain to make and release the tryptophan tetramic acid, cyclo-acetoacetyl-L-tryptophan (c-AATrp), as the first intermediate in the pathway. CpaS catalyzes a Dieckmann-type cyclization on the N-acetoacetyl-Trp intermediate bound in thioester linkage to the phosphopantetheinyl arm of the T domain to form and release c-AATrp. CpaD then regiospecifically dimethylallylates c-AATrp to form beta-cyclopiazonic acid. CpaD discriminates against free Trp but accepts tryptophan-containing thiohydantoins, diketopiperazines, and linear peptides as substrates for C4-prenylation and also acts as regiospecific O-dimethylallyltransferase (DMAT) on a tyrosine-derived tetramic acid. The beta-cyclopiazonate dehydrogenase cpaO then carries out the dehydrogenation of beta-CPA to yield an unstable enimine product, which is captured by intramolecular cyclization to create the pentacyclic fused scaffold of alpha-cyclopiazonate. Finally, the cytochrome P450 monooxygenase cpaH mediates the conversion of CPA into the less toxic 2-oxocyclopiazonic acid, the end product of the CPA pathway in A.oryza. This is Cyclo-acetoacetyl-L-tryptophan synthase from Aspergillus oryzae (Yellow koji mold).